The chain runs to 443 residues: Thymidine phosphorylase (443 aa).

The protein belongs to the thymidine/pyrimidine-nucleoside phosphorylase family. As to quaternary structure, homodimer.

The catalysed reaction is thymidine + phosphate = 2-deoxy-alpha-D-ribose 1-phosphate + thymine. Its pathway is pyrimidine metabolism; dTMP biosynthesis via salvage pathway; dTMP from thymine: step 1/2. Its function is as follows. The enzymes which catalyze the reversible phosphorolysis of pyrimidine nucleosides are involved in the degradation of these compounds and in their utilization as carbon and energy sources, or in the rescue of pyrimidine bases for nucleotide synthesis. The chain is Thymidine phosphorylase from Shewanella sp. (strain MR-7).